The chain runs to 398 residues: S-adenosylmethionine synthase (398 aa).

Residue histidine 17 participates in ATP binding. Aspartate 19 serves as a coordination point for Mg(2+). Glutamate 45 contacts K(+). Positions 58 and 101 each coordinate L-methionine. The tract at residues 101–111 is flexible loop; that stretch reads QSPDIAQGVDT. ATP contacts are provided by residues 176-178, 243-244, aspartate 252, 258-259, and lysine 279; these read DGK, RF, and RK. Aspartate 252 is a binding site for L-methionine. Lysine 283 contributes to the L-methionine binding site.

The protein belongs to the AdoMet synthase family. As to quaternary structure, homotetramer; dimer of dimers. Mg(2+) serves as cofactor. Requires K(+) as cofactor.

The protein localises to the cytoplasm. It carries out the reaction L-methionine + ATP + H2O = S-adenosyl-L-methionine + phosphate + diphosphate. It participates in amino-acid biosynthesis; S-adenosyl-L-methionine biosynthesis; S-adenosyl-L-methionine from L-methionine: step 1/1. Its function is as follows. Catalyzes the formation of S-adenosylmethionine (AdoMet) from methionine and ATP. The overall synthetic reaction is composed of two sequential steps, AdoMet formation and the subsequent tripolyphosphate hydrolysis which occurs prior to release of AdoMet from the enzyme. In Staphylococcus saprophyticus subsp. saprophyticus (strain ATCC 15305 / DSM 20229 / NCIMB 8711 / NCTC 7292 / S-41), this protein is S-adenosylmethionine synthase.